The chain runs to 297 residues: Ribosomal RNA small subunit methyltransferase H (297 aa).

S-adenosyl-L-methionine is bound by residues 30-32, aspartate 48, phenylalanine 75, aspartate 96, and glutamine 103; that span reads GGY.

The protein belongs to the methyltransferase superfamily. RsmH family.

The protein localises to the cytoplasm. It catalyses the reaction cytidine(1402) in 16S rRNA + S-adenosyl-L-methionine = N(4)-methylcytidine(1402) in 16S rRNA + S-adenosyl-L-homocysteine + H(+). Its function is as follows. Specifically methylates the N4 position of cytidine in position 1402 (C1402) of 16S rRNA. The sequence is that of Ribosomal RNA small subunit methyltransferase H from Ehrlichia canis (strain Jake).